The sequence spans 160 residues: Competence protein ComGD (160 aa).

The helical transmembrane segment at 30-50 (AFTMLESLLVLGLVSILALGL) threads the bilayer.

In terms of assembly, the transformation pili are flexible filaments, consisting mainly of the major pilin ComGC and smaller amounts of the minor pilins, including at least ComGD, ComGF and ComGG, and perhaps ComGE. Interacts with ComGE. Interacts with ComGF. Interacts with ComGG.

The protein localises to the cell membrane. It is found in the cell surface. The protein resides in the fimbrium. Required for formation of the type IV-like pilus (T4P) that plays a role in transformation. Transformation pili are dynamically extended and retracted, perhaps thereby promoting DNA uptake and transformation. Involved in transformation. Required for DNA binding. This chain is Competence protein ComGD, found in Streptococcus pneumoniae (strain ATCC BAA-255 / R6).